A 418-amino-acid chain; its full sequence is AP-3 complex subunit mu-1 (418 aa).

An MHD domain is found at asparagine 176–arginine 417.

The protein belongs to the adaptor complexes medium subunit family. In terms of assembly, adaptor protein complex 3 (AP-3) is a heterotetramer composed of two large adaptins (delta-type subunit AP3D1 and beta-type subunit AP3B1 or AP3B2), a medium adaptin (mu-type subunit AP3M1 or AP3M2) and a small adaptin (sigma-type subunit APS1 or AP3S2). Interacts with AGAP1. AP-3 associates with the BLOC-1 complex.

The protein resides in the golgi apparatus. Its subcellular location is the cytoplasmic vesicle membrane. Its function is as follows. Part of the AP-3 complex, an adaptor-related complex which is not clathrin-associated. The complex is associated with the Golgi region as well as more peripheral structures. It facilitates the budding of vesicles from the Golgi membrane and may be directly involved in trafficking to lysosomes. In concert with the BLOC-1 complex, AP-3 is required to target cargos into vesicles assembled at cell bodies for delivery into neurites and nerve terminals. This is AP-3 complex subunit mu-1 (Ap3m1) from Rattus norvegicus (Rat).